The chain runs to 926 residues: Storkhead-box protein 2 (926 aa).

Disordered stretches follow at residues 1–32 (MKKTRSTTLRRAWPSSDFSDRASDRMRSRSEK), 338–391 (EEEK…HLDI), 452–529 (EMPF…SYID), 564–588 (KEPSSACSLLEPGKPPESLPSYGEL), 632–672 (GVKK…GGVA), 724–803 (LKSH…GTMQ), and 825–926 (LAPK…VTSV). Residues 18–32 (FSDRASDRMRSRSEK) are compositionally biased toward basic and acidic residues. Basic residues predominate over residues 353–378 (HSGRSKKSRTHRKSHGKSRSHSKTRV). A compositionally biased stretch (basic and acidic residues) spans 379–391 (SKGDPSDGSHLDI). Residues 463 to 472 (SHSKVHRSHS) show a composition bias toward basic residues. Over residues 473 to 495 (HTQDRRSRNERSNKAKERSRSMD) the composition is skewed to basic and acidic residues. Positions 518–529 (QDDQTPSQSYID) are enriched in polar residues. The segment covering 632–658 (GVKKLSPSDRQVPHSSREPVGHKEESP) has biased composition (basic and acidic residues). Positions 746 to 769 (LGTSAAQAMPASQRQQESGGNQEA) are enriched in polar residues. The segment covering 785–799 (GANKNTEEEKNREDV) has biased composition (basic and acidic residues). Polar residues-rich tracts occupy residues 847–884 (MDSSSITVDSGFNSPRTRESLASNTSSIVESNRRQNPA) and 914–926 (KPSNCLQASVTSV).

This chain is Storkhead-box protein 2 (STOX2), found in Homo sapiens (Human).